The sequence spans 149 residues: UPF0260 protein PSEEN4031 (149 aa).

It belongs to the UPF0260 family.

This Pseudomonas entomophila (strain L48) protein is UPF0260 protein PSEEN4031.